Consider the following 352-residue polypeptide: Chorismate synthase (352 aa).

Residue Arg48 coordinates NADP(+). FMN is bound by residues 125-127 (RSS), 237-238 (NA), Gly278, 293-297 (KPTSS), and Arg319.

Belongs to the chorismate synthase family. Homotetramer. FMNH2 is required as a cofactor.

The catalysed reaction is 5-O-(1-carboxyvinyl)-3-phosphoshikimate = chorismate + phosphate. Its pathway is metabolic intermediate biosynthesis; chorismate biosynthesis; chorismate from D-erythrose 4-phosphate and phosphoenolpyruvate: step 7/7. Its function is as follows. Catalyzes the anti-1,4-elimination of the C-3 phosphate and the C-6 proR hydrogen from 5-enolpyruvylshikimate-3-phosphate (EPSP) to yield chorismate, which is the branch point compound that serves as the starting substrate for the three terminal pathways of aromatic amino acid biosynthesis. This reaction introduces a second double bond into the aromatic ring system. This chain is Chorismate synthase, found in Francisella tularensis subsp. mediasiatica (strain FSC147).